Consider the following 205-residue polypeptide: Cytochrome c biogenesis ATP-binding export protein CcmA 2 (205 aa).

Positions 2–205 constitute an ABC transporter domain; sequence LEARDLHCER…LALTGGEAGL (204 aa). 34 to 41 contributes to the ATP binding site; it reads GGNGAGKT.

This sequence belongs to the ABC transporter superfamily. CcmA exporter (TC 3.A.1.107) family. As to quaternary structure, the complex is composed of two ATP-binding proteins (CcmA) and two transmembrane proteins (CcmB).

The protein localises to the cell inner membrane. It catalyses the reaction heme b(in) + ATP + H2O = heme b(out) + ADP + phosphate + H(+). Its function is as follows. Part of the ABC transporter complex CcmAB involved in the biogenesis of c-type cytochromes; once thought to export heme, this seems not to be the case, but its exact role is uncertain. Responsible for energy coupling to the transport system. This is Cytochrome c biogenesis ATP-binding export protein CcmA 2 from Salmonella paratyphi A (strain ATCC 9150 / SARB42).